Consider the following 507-residue polypeptide: Maturase K (507 aa).

It belongs to the intron maturase 2 family. MatK subfamily.

It is found in the plastid. The protein resides in the chloroplast. In terms of biological role, usually encoded in the trnK tRNA gene intron. Probably assists in splicing its own and other chloroplast group II introns. In Lens ervoides (Beaded lentil), this protein is Maturase K.